We begin with the raw amino-acid sequence, 456 residues long: Potassium voltage-gated channel subfamily A member 7 (456 aa).

The helical transmembrane segment at 144-164 (VLAVVSVLVILVSIVVFCLET) threads the bilayer. The N-linked (GlcNAc...) asparagine glycan is linked to Asn-191. A helical membrane pass occupies residues 209-229 (FFVVETLCICWFSFELLVRLL). A lipid anchor (S-palmitoyl cysteine) is attached at Cys-231. A helical membrane pass occupies residues 241–261 (VMNLIDFVAILPYFVALGTEL). The chain crosses the membrane as a helical; Voltage-sensor span at residues 276-295 (ILRVIRLVRVFRIFKLSRHS). Residues 312-332 (LGLLIFFLFIGVVLFSSAVYF) traverse the membrane as a helical segment. Residues 358–363 (TVGYGD) carry the Selectivity filter motif. The chain crosses the membrane as a helical span at residues 373 to 393 (IVGSLCAIAGVLTISLPVPVI).

This sequence belongs to the potassium channel family. A (Shaker) (TC 1.A.1.2) subfamily. Kv1.7/KCNA7 sub-subfamily. As to quaternary structure, heterotetramer of potassium channel proteins. In terms of tissue distribution, highly expressed in skeletal muscle, heart and kidney.

The protein localises to the membrane. It catalyses the reaction K(+)(in) = K(+)(out). Functionally, mediates the voltage-dependent potassium ion permeability of excitable membranes. Assuming opened or closed conformations in response to the voltage difference across the membrane, the protein forms a potassium-selective channel through which potassium ions may pass in accordance with their electrochemical gradient. In Homo sapiens (Human), this protein is Potassium voltage-gated channel subfamily A member 7 (KCNA7).